Consider the following 269-residue polypeptide: Ribonuclease HII (269 aa).

In terms of domain architecture, RNase H type-2 spans 83-269; sequence YLIAGVDEVG…HRMSFLTNIL (187 aa). The a divalent metal cation site is built by Asp89, Glu90, and Asp185.

This sequence belongs to the RNase HII family. It depends on Mn(2+) as a cofactor. The cofactor is Mg(2+).

It localises to the cytoplasm. The enzyme catalyses Endonucleolytic cleavage to 5'-phosphomonoester.. In terms of biological role, endonuclease that specifically degrades the RNA of RNA-DNA hybrids. The polypeptide is Ribonuclease HII (Clostridium botulinum (strain Langeland / NCTC 10281 / Type F)).